Reading from the N-terminus, the 360-residue chain is Glutamate 5-kinase (360 aa).

An ATP-binding site is contributed by Lys7. Ser47, Asp134, and Asn146 together coordinate substrate. Residues 166-167 and 210-216 each bind ATP; these read TD and TGGISTK. One can recognise a PUA domain in the interval 275 to 356; that stretch reads VGKITLDDGA…SSIIVVHRDV (82 aa).

Belongs to the glutamate 5-kinase family.

It localises to the cytoplasm. It carries out the reaction L-glutamate + ATP = L-glutamyl 5-phosphate + ADP. It participates in amino-acid biosynthesis; L-proline biosynthesis; L-glutamate 5-semialdehyde from L-glutamate: step 1/2. Its function is as follows. Catalyzes the transfer of a phosphate group to glutamate to form L-glutamate 5-phosphate. This chain is Glutamate 5-kinase, found in Prochlorococcus marinus (strain MIT 9312).